Reading from the N-terminus, the 61-residue chain is U-poneritoxin(01)-Om5b (61 aa).

The first 23 residues, M1 to A23, serve as a signal peptide directing secretion. Residues D24–A41 constitute a propeptide that is removed on maturation. The residue at position 59 (Q59) is a Glutamine amide.

Belongs to the formicidae venom precursor-01 superfamily. In terms of processing, truncated sequences of this peptide have also been found in the venom. It is possible they have been cleaved in the venom. As to expression, expressed by the venom gland.

The protein localises to the secreted. Functionally, acidic peptide with potent hemolytic activities. It also shows low antimicrobial activities against E.coli (MIC=50uM), as well as histamine-releasing activity (28.3% at 10 uM). Does not have activity against S.aureus, and S.cerevisiae. This chain is U-poneritoxin(01)-Om5b, found in Odontomachus monticola (Trap-jaw ant).